A 222-amino-acid polypeptide reads, in one-letter code: UPF0488 protein C8orf33 homolog (222 aa).

The segment covering 1-16 (MAEPGRPAREAPAASS) has biased composition (low complexity). 3 disordered regions span residues 1 to 103 (MAEP…AEQL), 119 to 146 (KTQRPTPKQKEQAVGAIRTLRSEKTPLP), and 186 to 210 (VSEATRKKSGRVCRPRPAERAKTTP). Ala2 is modified (N-acetylalanine). Positions 17 to 28 (RKTHRAPRRPRP) are enriched in basic residues. Residue Arg27 is modified to Omega-N-methylarginine. Residues 29-39 (SRSASGASEPP) show a composition bias toward low complexity. Phosphoserine is present on Ser75. A compositionally biased stretch (low complexity) spans 93–103 (PPSAEAQAEQL).

It belongs to the UPF0488 family.

The sequence is that of UPF0488 protein C8orf33 homolog from Mus musculus (Mouse).